Reading from the N-terminus, the 241-residue chain is Glucosamine-6-phosphate deaminase (241 aa).

The active-site Proton acceptor; for enolization step is the Asp67. The active-site For ring-opening step is Asn136. Residue His138 is the Proton acceptor; for ring-opening step of the active site. Glu143 acts as the For ring-opening step in catalysis.

Belongs to the glucosamine/galactosamine-6-phosphate isomerase family. NagB subfamily.

The catalysed reaction is alpha-D-glucosamine 6-phosphate + H2O = beta-D-fructose 6-phosphate + NH4(+). The protein operates within amino-sugar metabolism; N-acetylneuraminate degradation; D-fructose 6-phosphate from N-acetylneuraminate: step 5/5. Functionally, catalyzes the reversible isomerization-deamination of glucosamine 6-phosphate (GlcN6P) to form fructose 6-phosphate (Fru6P) and ammonium ion. The chain is Glucosamine-6-phosphate deaminase from Alkaliphilus oremlandii (strain OhILAs) (Clostridium oremlandii (strain OhILAs)).